The following is a 155-amino-acid chain: Large ribosomal subunit protein eL24 (155 aa).

Residues 119–155 (VKAAKKAAAPAPAKKSAPKQKAAKVTQKAAPRVGGKR) are disordered. The segment covering 124 to 133 (KAAAPAPAKK) has biased composition (low complexity).

The protein belongs to the eukaryotic ribosomal protein eL24 family.

The protein is Large ribosomal subunit protein eL24 (RpL24) of Drosophila melanogaster (Fruit fly).